A 775-amino-acid polypeptide reads, in one-letter code: Hepatocyte growth factor-regulated tyrosine kinase substrate (775 aa).

Residues 15 to 143 (ATSQLLLETD…IMKVEGHVFP (129 aa)) enclose the VHS domain. The segment at 160 to 220 (WVDAEECHRC…VCEPCYEQLN (61 aa)) adopts an FYVE-type zinc-finger fold. Zn(2+) is bound by residues cysteine 166, cysteine 169, cysteine 182, cysteine 185, cysteine 190, and cysteine 193. Lysine 207 is subject to N6-acetyllysine. Cysteine 212 and cysteine 215 together coordinate Zn(2+). Tyrosine 216 bears the Phosphotyrosine mark. A disordered region spans residues 223–319 (AEGKASSTTE…SPVNSSAPLA (97 aa)). Residues 225 to 541 (GKASSTTELP…QRLQEQEKER (317 aa)) form an interaction with SNX1 region. The UIM domain maps to 258 to 277 (QEEEELQLALALSQSEAEEK). Residues 307–316 (LYSSPVNSSA) are compositionally biased toward polar residues. Phosphotyrosine is present on residues tyrosine 308, tyrosine 329, and tyrosine 334. The interval 338–405 (KQEEARKSPT…NGESEESHEQ (68 aa)) is disordered. An interaction with SNAP25 and TRAK2 region spans residues 443 to 541 (SINTMHPQLL…QRLQEQEKER (99 aa)). The interaction with STAM stretch occupies residues 452 to 570 (LELLNQLDER…FPLPYAQLQA (119 aa)). The segment at 478 to 775 (ARGALSALRE…GSEAQLISFD (298 aa)) is interaction with NF2. The residue at position 549 (lysine 549) is an N6-succinyllysine. The segment covering 640–657 (PGAQAAPQAQAGPTTSPA) has biased composition (low complexity). 2 disordered regions span residues 640-690 (PGAQ…PQTS) and 719-775 (QDAS…ISFD). Positions 658 to 690 (YSSYQPTPTPGYQSVASQAPQSLPAISQPPQTS) are enriched in polar residues. Residues 744 to 761 (TGPPQQQPPVAQPAPTQG) are compositionally biased toward pro residues.

Component of the ESCRT-0 complex composed of STAM or STAM2 and HGS. Part of a complex at least composed of HSG, STAM2 (or probably STAM) and EPS15. Interacts with STAM. Interacts with STAM2. Interacts with EPS15; the interaction is direct, calcium-dependent and inhibited by SNAP25. Identified in a complex with STAM and LITAF. Found in a complex with STAM and E3 ligase ITCH and DTX3L. Interacts with E3 ligase DTX3L; the interaction brings together STAM and HSG, promotes their recruitment to early endosomes and decreases STAM and HGS ubiquitination by ITCH. Interacts with NF2; the interaction is direct. Interacts with ubiquitin; the interaction is direct. Interacts with VPS37C. Interacts with SMAD1, SMAD2 and SMAD3. Interacts with TSG101; the interaction mediates the association with the ESCRT-I complex. Interacts with SNAP25; the interaction is direct and decreases with addition of increasing concentrations of free calcium. Interacts with SNX1; the interaction is direct. Component of a 550 kDa membrane complex at least composed of HGS and SNX1 but excluding EGFR. Interacts with TRAK1. Interacts with TRAK2. Component of the CART complex, at least composed of ACTN4, HGS/HRS, MYO5B and TRIM3. Interacts with ARRDC3. Identified in a complex containing at least ARRDC4, AVPR2 and HGS. Interacts (via UIM domain) with UBQLN1 (via ubiquitin-like domain). Interacts with LAPTM4B; promotes HGS ubiquitination. In terms of processing, phosphorylated on Tyr-334. This phosphorylation occurs in response to EGF. A minor site of phosphorylation on Tyr-329 is detected. Protein phosphorylation may also be triggered in response to IL-2, GM-CSF and HGF. Ubiquitinated by ITCH. As to expression, ubiquitous expression in adult and fetal tissues with higher expression in testis.

It is found in the cytoplasm. The protein localises to the early endosome membrane. The protein resides in the endosome. It localises to the multivesicular body membrane. Involved in intracellular signal transduction mediated by cytokines and growth factors. When associated with STAM, it suppresses DNA signaling upon stimulation by IL-2 and GM-CSF. Could be a direct effector of PI3-kinase in vesicular pathway via early endosomes and may regulate trafficking to early and late endosomes by recruiting clathrin. May concentrate ubiquitinated receptors within clathrin-coated regions. Involved in down-regulation of receptor tyrosine kinase via multivesicular body (MVBs) when complexed with STAM (ESCRT-0 complex). The ESCRT-0 complex binds ubiquitin and acts as a sorting machinery that recognizes ubiquitinated receptors and transfers them to further sequential lysosomal sorting/trafficking processes. May contribute to the efficient recruitment of SMADs to the activin receptor complex. Involved in receptor recycling via its association with the CART complex, a multiprotein complex required for efficient transferrin receptor recycling but not for EGFR degradation. This is Hepatocyte growth factor-regulated tyrosine kinase substrate (Hgs) from Mus musculus (Mouse).